A 128-amino-acid chain; its full sequence is Elongation factor G (128 aa).

The protein belongs to the GTP-binding elongation factor family. EF-G/EF-2 subfamily.

The protein resides in the cytoplasm. Functionally, catalyzes the GTP-dependent ribosomal translocation step during translation elongation. During this step, the ribosome changes from the pre-translocational (PRE) to the post-translocational (POST) state as the newly formed A-site-bound peptidyl-tRNA and P-site-bound deacylated tRNA move to the P and E sites, respectively. Catalyzes the coordinated movement of the two tRNA molecules, the mRNA and conformational changes in the ribosome. The protein is Elongation factor G (fusA) of Planobispora rosea.